The chain runs to 237 residues: MRPSGRAPDEMRAITIETGYTKHAEGSCLIGFGDTKVLCTASVEERLPPWLRGKGQGWVTGEYSMLPRATHTRGNREAARGKQSGRTQEIQRLIGRSLRAVVDLEKLGERQITLDCDVIQADGGTRTASISGAWIALRLAVSGLMEQGQIKDDPITGKIAAISCGIYNGTPVLDLDYAEDSNADADANFVLIEGGKIAEAQATAEGATYDEEGLMRLLRLAQIGCAQIFKSQDEATK.

Residues Arg86 and 124-126 (GTR) each bind phosphate.

This sequence belongs to the RNase PH family. In terms of assembly, homohexameric ring arranged as a trimer of dimers.

It catalyses the reaction tRNA(n+1) + phosphate = tRNA(n) + a ribonucleoside 5'-diphosphate. In terms of biological role, phosphorolytic 3'-5' exoribonuclease that plays an important role in tRNA 3'-end maturation. Removes nucleotide residues following the 3'-CCA terminus of tRNAs; can also add nucleotides to the ends of RNA molecules by using nucleoside diphosphates as substrates, but this may not be physiologically important. Probably plays a role in initiation of 16S rRNA degradation (leading to ribosome degradation) during starvation. The polypeptide is Ribonuclease PH (Erythrobacter litoralis (strain HTCC2594)).